The sequence spans 180 residues: GTP cyclohydrolase 1 (180 aa).

The Zn(2+) site is built by Cys-71, His-74, and Cys-142.

Belongs to the GTP cyclohydrolase I family. In terms of assembly, homomer.

The enzyme catalyses GTP + H2O = 7,8-dihydroneopterin 3'-triphosphate + formate + H(+). It functions in the pathway cofactor biosynthesis; 7,8-dihydroneopterin triphosphate biosynthesis; 7,8-dihydroneopterin triphosphate from GTP: step 1/1. This is GTP cyclohydrolase 1 from Helicobacter pylori (strain Shi470).